The following is a 313-amino-acid chain: Maintenance of mitochondrial morphology protein 1 (313 aa).

The Lumenal segment spans residues 1–12 (MIHLPQGSFTQG). A helical transmembrane segment spans residues 13–33 (LIVGQLLTLAIIYVFLRFFLF). Topologically, residues 34–313 (CSPIPKSVAN…APQEESSNED (280 aa)) are cytoplasmic. Polar residues predominate over residues 42-63 (ANSPKQTGNETPDETPSTPLSN). The tract at residues 42-65 (ANSPKQTGNETPDETPSTPLSNNK) is disordered. The SMP-LTD domain occupies 90–288 (EPESLDWFNV…SPQFQQIAIP (199 aa)).

Belongs to the MMM1 family. Homodimer. Component of the ER-mitochondria encounter structure (ERMES) or MDM complex, composed of mmm1, mdm10, mdm12 and mdm34. A mmm1 homodimer associates with one molecule of mdm12 on each side in a pairwise head-to-tail manner, and the SMP-LTD domains of mmm1 and mdm12 generate a continuous hydrophobic tunnel for phospholipid trafficking.

The protein resides in the endoplasmic reticulum membrane. Functionally, component of the ERMES/MDM complex, which serves as a molecular tether to connect the endoplasmic reticulum (ER) and mitochondria. Components of this complex are involved in the control of mitochondrial shape and protein biogenesis, and function in nonvesicular lipid trafficking between the ER and mitochondria. The mdm12-mmm1 subcomplex functions in the major beta-barrel assembly pathway that is responsible for biogenesis of all outer membrane beta-barrel proteins, and acts in a late step after the SAM complex. The mdm10-mdm12-mmm1 subcomplex further acts in the TOM40-specific pathway after the action of the mdm12-mmm1 complex. Essential for establishing and maintaining the structure of mitochondria and maintenance of mtDNA nucleoids. The sequence is that of Maintenance of mitochondrial morphology protein 1 from Schizosaccharomyces pombe (strain 972 / ATCC 24843) (Fission yeast).